The sequence spans 640 residues: 1-deoxy-D-xylulose-5-phosphate synthase (640 aa).

Residues histidine 79 and 120 to 122 (GHS) contribute to the thiamine diphosphate site. Aspartate 151 serves as a coordination point for Mg(2+). Thiamine diphosphate contacts are provided by residues 152–153 (GS), asparagine 180, tyrosine 290, and glutamate 372. Residue asparagine 180 participates in Mg(2+) binding.

This sequence belongs to the transketolase family. DXPS subfamily. In terms of assembly, homodimer. Mg(2+) serves as cofactor. The cofactor is thiamine diphosphate.

The enzyme catalyses D-glyceraldehyde 3-phosphate + pyruvate + H(+) = 1-deoxy-D-xylulose 5-phosphate + CO2. It functions in the pathway metabolic intermediate biosynthesis; 1-deoxy-D-xylulose 5-phosphate biosynthesis; 1-deoxy-D-xylulose 5-phosphate from D-glyceraldehyde 3-phosphate and pyruvate: step 1/1. Catalyzes the acyloin condensation reaction between C atoms 2 and 3 of pyruvate and glyceraldehyde 3-phosphate to yield 1-deoxy-D-xylulose-5-phosphate (DXP). The polypeptide is 1-deoxy-D-xylulose-5-phosphate synthase (Rhodopseudomonas palustris (strain BisA53)).